Here is a 120-residue protein sequence, read N- to C-terminus: Probable early E4 13 kDa protein (120 aa).

This chain is Probable early E4 13 kDa protein, found in Human adenovirus A serotype 12 (HAdV-12).